Consider the following 432-residue polypeptide: Gamma-glutamyl phosphate reductase (432 aa).

The protein belongs to the gamma-glutamyl phosphate reductase family.

The protein localises to the cytoplasm. It catalyses the reaction L-glutamate 5-semialdehyde + phosphate + NADP(+) = L-glutamyl 5-phosphate + NADPH + H(+). Its pathway is amino-acid biosynthesis; L-proline biosynthesis; L-glutamate 5-semialdehyde from L-glutamate: step 2/2. In terms of biological role, catalyzes the NADPH-dependent reduction of L-glutamate 5-phosphate into L-glutamate 5-semialdehyde and phosphate. The product spontaneously undergoes cyclization to form 1-pyrroline-5-carboxylate. The polypeptide is Gamma-glutamyl phosphate reductase (Corynebacterium glutamicum (strain R)).